The primary structure comprises 151 residues: NADH dehydrogenase [ubiquinone] 1 beta subcomplex subunit 11, mitochondrial (151 aa).

The transit peptide at 1 to 29 (MAARLLSLCARRLSVTAAVRGLPAAGVRW) directs the protein to the mitochondrion. A disordered region spans residues 39 to 62 (STVERKRQRQPTMHWQEDPESEDE). Residues 87 to 107 (VVFFFGFSIVLVLGTTFMAYL) traverse the membrane as a helical segment.

This sequence belongs to the complex I NDUFB11 subunit family. Complex I is composed of 45 different subunits. Interacts with BCAP31.

It is found in the mitochondrion inner membrane. Functionally, accessory subunit of the mitochondrial membrane respiratory chain NADH dehydrogenase (Complex I), that is believed not to be involved in catalysis. Complex I functions in the transfer of electrons from NADH to the respiratory chain. The immediate electron acceptor for the enzyme is believed to be ubiquinone. The chain is NADH dehydrogenase [ubiquinone] 1 beta subcomplex subunit 11, mitochondrial (NDUFB11) from Cricetulus griseus (Chinese hamster).